Reading from the N-terminus, the 49-residue chain is uncharacterized protein (49 aa).

Residues 8 to 28 (FFLFSSGVLQATTLLLVILIF) traverse the membrane as a helical segment.

It is found in the cell membrane. This is an uncharacterized protein from Bacillus subtilis (strain 168).